A 457-amino-acid polypeptide reads, in one-letter code: Argininosuccinate lyase (457 aa).

This sequence belongs to the lyase 1 family. Argininosuccinate lyase subfamily.

It is found in the cytoplasm. It catalyses the reaction 2-(N(omega)-L-arginino)succinate = fumarate + L-arginine. It participates in amino-acid biosynthesis; L-arginine biosynthesis; L-arginine from L-ornithine and carbamoyl phosphate: step 3/3. The polypeptide is Argininosuccinate lyase (Aquifex aeolicus (strain VF5)).